The following is a 204-amino-acid chain: COBRA-like protein 5 (204 aa).

Residues M1–A24 form the signal peptide. N-linked (GlcNAc...) asparagine glycans are attached at residues N31 and N195.

This sequence belongs to the COBRA family. In terms of tissue distribution, expressed in roots, stems, leaves, flowers and siliques.

The chain is COBRA-like protein 5 (COBL5) from Arabidopsis thaliana (Mouse-ear cress).